An 822-amino-acid polypeptide reads, in one-letter code: Structure-specific endonuclease subunit SLX4 (822 aa).

Disordered stretches follow at residues 1–39 (MSHL…PSAS), 73–117 (TPAV…PRPL), 277–362 (GTTN…GVSD), 390–418 (RVSS…TSVS), 456–507 (KSHE…SGQL), and 589–676 (KNSA…QASS). Over residues 13–39 (SPSPSQIFGSSTTPVATNSTHSEPSAS) the composition is skewed to polar residues. Positions 280 to 294 (NSSSSEGSSNKSSGK) are enriched in low complexity. Polar residues predominate over residues 310–320 (VTTITSLSTAQ). Positions 342-354 (GKRSKSQTKKGGN) are enriched in basic residues. The segment covering 460-470 (SSTLTLPSTST) has biased composition (low complexity). Residues 471–484 (NASNQGFSSQNTIN) are compositionally biased toward polar residues. Low complexity predominate over residues 490-506 (SQTTSTTTESTGVESGQ). Residues 589-612 (KNSAPTSLPANNANPPDSHASGQK) show a composition bias toward polar residues. Residues 627 to 636 (TTKRASKAPQ) are compositionally biased toward basic residues. The segment covering 637–650 (KKQSTSSTSHSAKA) has biased composition (low complexity).

The protein belongs to the SLX4 family. Forms a heterodimer with SLX1. Post-translationally, phosphorylated in response to DNA damage.

It localises to the nucleus. Functionally, regulatory subunit of the SLX1-SLX4 structure-specific endonuclease that resolves DNA secondary structures generated during DNA repair and recombination. Has endonuclease activity towards branched DNA substrates, introducing single-strand cuts in duplex DNA close to junctions with ss-DNA. In Coccidioides immitis (strain RS) (Valley fever fungus), this protein is Structure-specific endonuclease subunit SLX4.